A 24-amino-acid chain; its full sequence is DLFQVIKEKLKELTGGVIEGIQGV.

Expressed by the dorsal and submental skin glands.

It is found in the secreted. This is Citropin-3.1.2 from Ranoidea citropa (Australian Blue Mountains tree frog).